The sequence spans 664 residues: Alkaline/neutral invertase C, mitochondrial (664 aa).

Residues S41, S125, and S657 each carry the phosphoserine modification.

The protein belongs to the glycosyl hydrolase 100 family. Expressed in seedlings, roots and flowers.

Its subcellular location is the mitochondrion. It catalyses the reaction Hydrolysis of terminal non-reducing beta-D-fructofuranoside residues in beta-D-fructofuranosides.. In terms of biological role, mitochondrial invertase that cleaves sucrose into glucose and fructose and is involved in the regulation of aerial tissue development and floral transition. May be modulating hormone balance in relation to the radicle emergence. This Arabidopsis thaliana (Mouse-ear cress) protein is Alkaline/neutral invertase C, mitochondrial.